Here is a 443-residue protein sequence, read N- to C-terminus: Carboxypeptidase M (443 aa).

The N-terminal stretch at 1-17 (MDFPCLWLGLLLPLVAA) is a signal peptide. Residues 21–311 (NYHRQEGMEA…ASLIEYIKQV (291 aa)) enclose the Peptidase M14 domain. Residue Asn-38 is glycosylated (N-linked (GlcNAc...) asparagine). Zn(2+) contacts are provided by His-83 and Glu-86. Asn-115 and Asn-164 each carry an N-linked (GlcNAc...) asparagine glycan. Disulfide bonds link Cys-138–Cys-285, Cys-242–Cys-284, and Cys-341–Cys-410. His-190 is a binding site for Zn(2+). The active-site Proton donor/acceptor is Glu-281. N-linked (GlcNAc...) asparagine glycans are attached at residues Asn-363 and Asn-384. A lipid anchor (GPI-anchor amidated serine) is attached at Ser-423. Positions 424 to 443 (AATKPSLFLFLVSLLHIFFK) are cleaved as a propeptide — removed in mature form.

This sequence belongs to the peptidase M14 family. Zn(2+) is required as a cofactor.

The protein localises to the cell membrane. The enzyme catalyses Cleavage of C-terminal arginine or lysine residues from polypeptides.. Its activity is regulated as follows. Inhibited by O-phenanthroline and MGTA and activated by cobalt. Specifically removes C-terminal basic residues (Arg or Lys) from peptides and proteins. It is believed to play important roles in the control of peptide hormone and growth factor activity at the cell surface, and in the membrane-localized degradation of extracellular proteins. This is Carboxypeptidase M (CPM) from Homo sapiens (Human).